The following is a 323-amino-acid chain: Beta-ketoacyl-[acyl-carrier-protein] synthase III (323 aa).

Residues C114 and H250 contribute to the active site. Residues 251 to 255 (QANIR) are ACP-binding. Residue N280 is part of the active site.

This sequence belongs to the thiolase-like superfamily. FabH family. Homodimer.

It is found in the cytoplasm. The enzyme catalyses malonyl-[ACP] + acetyl-CoA + H(+) = 3-oxobutanoyl-[ACP] + CO2 + CoA. The protein operates within lipid metabolism; fatty acid biosynthesis. In terms of biological role, catalyzes the condensation reaction of fatty acid synthesis by the addition to an acyl acceptor of two carbons from malonyl-ACP. Catalyzes the first condensation reaction which initiates fatty acid synthesis and may therefore play a role in governing the total rate of fatty acid production. Possesses both acetoacetyl-ACP synthase and acetyl transacylase activities. Its substrate specificity determines the biosynthesis of branched-chain and/or straight-chain of fatty acids. The polypeptide is Beta-ketoacyl-[acyl-carrier-protein] synthase III (Alkalilimnicola ehrlichii (strain ATCC BAA-1101 / DSM 17681 / MLHE-1)).